Here is a 114-residue protein sequence, read N- to C-terminus: Large ribosomal subunit protein uL22c (114 aa).

Belongs to the universal ribosomal protein uL22 family. As to quaternary structure, part of the 50S ribosomal subunit.

The protein localises to the plastid. The protein resides in the cyanelle. Functionally, this protein binds specifically to 23S rRNA. In terms of biological role, the globular domain of the protein is located near the polypeptide exit tunnel on the outside of the subunit, while an extended beta-hairpin is found that lines the wall of the exit tunnel in the center of the 70S ribosome. The chain is Large ribosomal subunit protein uL22c (rpl22) from Cyanophora paradoxa.